The following is a 503-amino-acid chain: Probable cytosol aminopeptidase (503 aa).

Mn(2+) is bound by residues lysine 270 and aspartate 275. Residue lysine 282 is part of the active site. Mn(2+)-binding residues include aspartate 293, aspartate 352, and glutamate 354. Residue arginine 356 is part of the active site.

Belongs to the peptidase M17 family. Mn(2+) serves as cofactor.

Its subcellular location is the cytoplasm. It catalyses the reaction Release of an N-terminal amino acid, Xaa-|-Yaa-, in which Xaa is preferably Leu, but may be other amino acids including Pro although not Arg or Lys, and Yaa may be Pro. Amino acid amides and methyl esters are also readily hydrolyzed, but rates on arylamides are exceedingly low.. The catalysed reaction is Release of an N-terminal amino acid, preferentially leucine, but not glutamic or aspartic acids.. Presumably involved in the processing and regular turnover of intracellular proteins. Catalyzes the removal of unsubstituted N-terminal amino acids from various peptides. This is Probable cytosol aminopeptidase from Yersinia pseudotuberculosis serotype O:1b (strain IP 31758).